The following is a 498-amino-acid chain: Polyphosphate:AMP phosphotransferase (498 aa).

PPK2 stretches follow at residues 11 to 234 (IDDD…MQAA) and 269 to 491 (LSKE…LEKA).

This sequence belongs to the polyphosphate kinase 2 (PPK2) family. Class II subfamily.

The catalysed reaction is [phosphate](n) + ADP = [phosphate](n+1) + AMP. Its function is as follows. Uses inorganic polyphosphate (polyP) as a donor to convert AMP to ADP. Can also convert GMP to GDP, with lower efficiency. This Pseudomonas syringae pv. tomato (strain ATCC BAA-871 / DC3000) protein is Polyphosphate:AMP phosphotransferase.